The chain runs to 514 residues: MMVSWSVCRSSLALPACGLPSARHNSSMPVVRQALSPDNSSTVQNFSEIPGLWRNGLANLYSFWKLDGFRNIHRVMVHNFNTFGPIYREKIGYYDSVNIIKPEMPAILFKAEGHYPKRLTVEAWTSYRDYRNRKYGVLLKNGEDWRSNRVILNREVISPKVLGNFVPLLDEVGQDFVARVHKKIERSGQDKWTTDLSQELFKYALESVGSVLYGERLGLMLDYINPEAQHFIDCISLMFKTTSPMLYIPPAMLRRVGAKIWRDHVEAWDGIFNQADRCIQNIYRTMRQDTNTHGKYPGVLASLLMLDKLSIEDIKASVTELMAGGVDTTSITLLWTLYELARHPDLQEELRAEVAVARQSTQGDMLQMLKMIPLVKGALKETLRLHPVAVSLQRYITEEIVIQNYHIPCGTLVQLGLYAMGRDPDVFPRPEKYLPSRWLRTENQYFRSLGFGFGPRQCLGRRIAETEMQLFLIHMLENFRVDKQRQVEVHSTFELILLPEKPILLTLKPLKSGQ.

A mitochondrion-targeting transit peptide spans 1–39 (MMVSWSVCRSSLALPACGLPSARHNSSMPVVRQALSPDN). Cysteine 458 provides a ligand contact to heme.

This sequence belongs to the cytochrome P450 family. Heme is required as a cofactor. In terms of tissue distribution, in the ovary, not found in early vitellogenic follicles, barely detected in postvitellogenic follicles and abundant in post-ovulatory follicles.

It is found in the mitochondrion inner membrane. The enzyme catalyses 6 reduced [adrenodoxin] + cholesterol + 3 O2 + 6 H(+) = 4-methylpentanal + pregnenolone + 6 oxidized [adrenodoxin] + 4 H2O. The protein operates within lipid metabolism; C21-steroid hormone metabolism. Its function is as follows. Catalyzes the side-chain cleavage reaction of cholesterol to pregnenolone, the precursor of most steroid hormones. This Oncorhynchus mykiss (Rainbow trout) protein is Cholesterol side-chain cleavage enzyme, mitochondrial (cyp11a1).